The sequence spans 349 residues: 4-hydroxy-3-methylbut-2-en-1-yl diphosphate synthase (flavodoxin) (349 aa).

4 residues coordinate [4Fe-4S] cluster: Cys265, Cys268, Cys300, and Glu307.

It belongs to the IspG family. It depends on [4Fe-4S] cluster as a cofactor.

It catalyses the reaction (2E)-4-hydroxy-3-methylbut-2-enyl diphosphate + oxidized [flavodoxin] + H2O + 2 H(+) = 2-C-methyl-D-erythritol 2,4-cyclic diphosphate + reduced [flavodoxin]. It participates in isoprenoid biosynthesis; isopentenyl diphosphate biosynthesis via DXP pathway; isopentenyl diphosphate from 1-deoxy-D-xylulose 5-phosphate: step 5/6. Functionally, converts 2C-methyl-D-erythritol 2,4-cyclodiphosphate (ME-2,4cPP) into 1-hydroxy-2-methyl-2-(E)-butenyl 4-diphosphate. The chain is 4-hydroxy-3-methylbut-2-en-1-yl diphosphate synthase (flavodoxin) from Thermodesulfovibrio yellowstonii (strain ATCC 51303 / DSM 11347 / YP87).